Reading from the N-terminus, the 126-residue chain is Holo-[acyl-carrier-protein] synthase (126 aa).

Residues aspartate 8 and glutamate 56 each contribute to the Mg(2+) site.

Belongs to the P-Pant transferase superfamily. AcpS family. Mg(2+) is required as a cofactor.

The protein resides in the cytoplasm. The catalysed reaction is apo-[ACP] + CoA = holo-[ACP] + adenosine 3',5'-bisphosphate + H(+). Transfers the 4'-phosphopantetheine moiety from coenzyme A to a Ser of acyl-carrier-protein. This chain is Holo-[acyl-carrier-protein] synthase, found in Clostridium tetani (strain Massachusetts / E88).